A 287-amino-acid chain; its full sequence is Acetyl-coenzyme A carboxylase carboxyl transferase subunit beta (287 aa).

Positions 33–287 (LFSKCPGCKH…TLLAFHGGQA (255 aa)) constitute a CoA carboxyltransferase N-terminal domain. The Zn(2+) site is built by Cys-37, Cys-40, Cys-55, and Cys-58. The C4-type zinc finger occupies 37-58 (CPGCKHTIYQKDLGNDSVCPNC).

Belongs to the AccD/PCCB family. In terms of assembly, acetyl-CoA carboxylase is a heterohexamer composed of biotin carboxyl carrier protein (AccB), biotin carboxylase (AccC) and two subunits each of ACCase subunit alpha (AccA) and ACCase subunit beta (AccD). Requires Zn(2+) as cofactor.

The protein localises to the cytoplasm. It carries out the reaction N(6)-carboxybiotinyl-L-lysyl-[protein] + acetyl-CoA = N(6)-biotinyl-L-lysyl-[protein] + malonyl-CoA. The protein operates within lipid metabolism; malonyl-CoA biosynthesis; malonyl-CoA from acetyl-CoA: step 1/1. Functionally, component of the acetyl coenzyme A carboxylase (ACC) complex. Biotin carboxylase (BC) catalyzes the carboxylation of biotin on its carrier protein (BCCP) and then the CO(2) group is transferred by the transcarboxylase to acetyl-CoA to form malonyl-CoA. The protein is Acetyl-coenzyme A carboxylase carboxyl transferase subunit beta of Streptococcus sanguinis (strain SK36).